Here is a 129-residue protein sequence, read N- to C-terminus: Phosphoribosyl-AMP cyclohydrolase (129 aa).

Position 76 (D76) interacts with Mg(2+). C77 serves as a coordination point for Zn(2+). The Mg(2+) site is built by D78 and D80. The Zn(2+) site is built by C97 and C104.

It belongs to the PRA-CH family. As to quaternary structure, homodimer. Mg(2+) is required as a cofactor. Requires Zn(2+) as cofactor.

The protein localises to the cytoplasm. It carries out the reaction 1-(5-phospho-beta-D-ribosyl)-5'-AMP + H2O = 1-(5-phospho-beta-D-ribosyl)-5-[(5-phospho-beta-D-ribosylamino)methylideneamino]imidazole-4-carboxamide. It functions in the pathway amino-acid biosynthesis; L-histidine biosynthesis; L-histidine from 5-phospho-alpha-D-ribose 1-diphosphate: step 3/9. Its function is as follows. Catalyzes the hydrolysis of the adenine ring of phosphoribosyl-AMP. This chain is Phosphoribosyl-AMP cyclohydrolase, found in Methylibium petroleiphilum (strain ATCC BAA-1232 / LMG 22953 / PM1).